A 520-amino-acid chain; its full sequence is Sodium-dependent dicarboxylate transporter SdcS (520 aa).

The next 14 membrane-spanning stretches (helical) occupy residues 30 to 50, 55 to 75, 77 to 97, 104 to 124, 160 to 180, 207 to 227, 242 to 262, 298 to 318, 323 to 343, 362 to 382, 399 to 419, 428 to 448, 452 to 472, and 491 to 511; these read AGQL…LLFF, LPWE…WWIT, AIPI…GHIL, SEYG…AIAM, SMFV…LAII, IGYA…PLII, FAKW…ITWL, KVVQ…EFLL, VTSS…LFVI, ELPW…KGIS, GVSP…LTEV, MILP…LLLM, AMAA…AIIF, and LISA…VLGI.

It belongs to the SLC13A/DASS transporter (TC 2.A.47) family. NADC subfamily.

It localises to the cell membrane. Functionally, mediates the transport of the dicarboxylates fumarate, malate, and succinate across the cytoplasmic membrane via a Na(+)-electrochemical gradient. The protein is Sodium-dependent dicarboxylate transporter SdcS (sdcS) of Staphylococcus aureus (strain bovine RF122 / ET3-1).